The sequence spans 326 residues: Malate dehydrogenase (326 aa).

An NAD(+)-binding site is contributed by 12-18 (GAAGQIA). Residues Arg93 and Arg99 each contribute to the substrate site. Residues Asn106, Gln113, and 130–132 (VGN) contribute to the NAD(+) site. 2 residues coordinate substrate: Asn132 and Arg163. The active-site Proton acceptor is the His188.

It belongs to the LDH/MDH superfamily. MDH type 2 family.

The enzyme catalyses (S)-malate + NAD(+) = oxaloacetate + NADH + H(+). Catalyzes the reversible oxidation of malate to oxaloacetate. The protein is Malate dehydrogenase of Corynebacterium diphtheriae (strain ATCC 700971 / NCTC 13129 / Biotype gravis).